A 1341-amino-acid chain; its full sequence is WD repeat-containing protein 19 (1341 aa).

WD repeat units lie at residues 11–51 (SWLG…RSEI), 52–92 (SLPG…TSQL), 95–134 (GMRDQMSFLLWSKIGSFLAVGTIKGNLLIYNHQTSRKIPV), 137–175 (KHTKKITCGCWNSENLLALGGEDKMITVSNQEGDTIRQT), 273–311 (DHKDNLTSVALSQTLNKAATCGDNCIKIHDLTELRDMYA), and 317–356 (DENKGLGTLSWTDDGQLLALSTQRGSLHVFLTKLPILGDA). TPR repeat units follow at residues 736-769 (AQDLYLASNCPVAALEMRRDLQHWDSALQLAKRL), 775-808 (PFISKEYAIQLEFTGDYVNALAHYEKGITGDNKE), 840-873 (RVLKRDCGAILENMKQFSEAAQLYEKGQYYDRAA), 895-928 (PKIHLQYAKAKEADGRYKEAVVAYENAKQWNSVI), 951-984 (LDGAKMVARFFLQLGDYGSAIQFLVLSKCNNEAF), and 1020-1053 (EKRHFQAGKFFLLCGQYSRALKHFLKCPSSEDNV).

Component of the IFT complex A (IFT-A) complex. IFT-A complex is divided into a core subcomplex composed of IFT122:IFT140:WDR19 which is associated with TULP3 and a peripheral subcomplex composed of IFT43:WDR35:TTC21B. Interacts (via C-terminal region) with IFT122 (via C-terminal region). Interacts with BBS1. Interacts with TTC25. In terms of tissue distribution, tissue-specific expression of isoforms. Expressed in the prostate, testis, epididymis, submaxillary and salivary glands. Expressed in ependymal cells lining brain ventricles (at protein level).

The protein resides in the cell projection. It localises to the cilium. Its subcellular location is the cytoplasm. It is found in the cytoskeleton. The protein localises to the cilium basal body. The protein resides in the photoreceptor outer segment. It localises to the flagellum. In terms of biological role, as component of the IFT complex A (IFT-A), a complex required for retrograde ciliary transport and entry into cilia of G protein-coupled receptors (GPCRs), it is involved in cilia function and/or assembly. Essential for functional IFT-A assembly and ciliary entry of GPCRs. Associates with the BBSome complex to mediate ciliary transport. The polypeptide is WD repeat-containing protein 19 (Mus musculus (Mouse)).